The sequence spans 113 residues: Large ribosomal subunit protein uL22 (113 aa).

Belongs to the universal ribosomal protein uL22 family. In terms of assembly, part of the 50S ribosomal subunit.

Functionally, this protein binds specifically to 23S rRNA; its binding is stimulated by other ribosomal proteins, e.g. L4, L17, and L20. It is important during the early stages of 50S assembly. It makes multiple contacts with different domains of the 23S rRNA in the assembled 50S subunit and ribosome. Its function is as follows. The globular domain of the protein is located near the polypeptide exit tunnel on the outside of the subunit, while an extended beta-hairpin is found that lines the wall of the exit tunnel in the center of the 70S ribosome. This Xylella fastidiosa (strain M12) protein is Large ribosomal subunit protein uL22.